The sequence spans 182 residues: Large ribosomal subunit protein bL25 (182 aa).

Belongs to the bacterial ribosomal protein bL25 family. CTC subfamily. Part of the 50S ribosomal subunit; part of the 5S rRNA/L5/L18/L25 subcomplex. Contacts the 5S rRNA. Binds to the 5S rRNA independently of L5 and L18.

Functionally, this is one of the proteins that binds to the 5S RNA in the ribosome where it forms part of the central protuberance. In Borreliella burgdorferi (strain ZS7) (Borrelia burgdorferi), this protein is Large ribosomal subunit protein bL25.